Here is a 497-residue protein sequence, read N- to C-terminus: Protein nucleotidyltransferase YdiU (497 aa).

ATP-binding residues include Gly-88, Gly-90, Arg-91, Lys-110, Asp-122, Gly-123, Arg-173, and Arg-180. Asp-249 (proton acceptor) is an active-site residue. Asn-250 and Asp-259 together coordinate Mg(2+). Asp-259 is a binding site for ATP. Residues 477 to 497 (FARYAEPPEGGGRGYRTFCGT) form a disordered region.

Belongs to the SELO family. Mg(2+) is required as a cofactor. It depends on Mn(2+) as a cofactor.

The catalysed reaction is L-seryl-[protein] + ATP = 3-O-(5'-adenylyl)-L-seryl-[protein] + diphosphate. The enzyme catalyses L-threonyl-[protein] + ATP = 3-O-(5'-adenylyl)-L-threonyl-[protein] + diphosphate. It carries out the reaction L-tyrosyl-[protein] + ATP = O-(5'-adenylyl)-L-tyrosyl-[protein] + diphosphate. It catalyses the reaction L-histidyl-[protein] + UTP = N(tele)-(5'-uridylyl)-L-histidyl-[protein] + diphosphate. The catalysed reaction is L-seryl-[protein] + UTP = O-(5'-uridylyl)-L-seryl-[protein] + diphosphate. The enzyme catalyses L-tyrosyl-[protein] + UTP = O-(5'-uridylyl)-L-tyrosyl-[protein] + diphosphate. Functionally, nucleotidyltransferase involved in the post-translational modification of proteins. It can catalyze the addition of adenosine monophosphate (AMP) or uridine monophosphate (UMP) to a protein, resulting in modifications known as AMPylation and UMPylation. This Methylorubrum extorquens (strain PA1) (Methylobacterium extorquens) protein is Protein nucleotidyltransferase YdiU.